The primary structure comprises 261 residues: Putative hydro-lyase SSP0308 (261 aa).

The protein belongs to the D-glutamate cyclase family.

The chain is Putative hydro-lyase SSP0308 from Staphylococcus saprophyticus subsp. saprophyticus (strain ATCC 15305 / DSM 20229 / NCIMB 8711 / NCTC 7292 / S-41).